Consider the following 486-residue polypeptide: MKALDQLTFDNRFARLGDAFSTQVLPEPIADPRLVVASESAMALLDLDPAQAELPVFAELFSGHKLWEEADPRAMVYSGHQFGSYNPRLGDGRGLLLAEVLNDVGEHWDLHLKGAGQTPYSRMGDGRAVLRSSIREFLASEALHALGIATSRALCVIGSSTPVWRETRESAAMLTRLAQSHVRFGHFEYFYYTKQPEQQRVLIDHVLEQHYPECRDAEQPYLAMFRTIVERNAELIARWQAYGFCHGVMNTDNMSILGITFDFGPYAFLDDFDANFICNHSDDRGRYSYANQVPIAHWNLSALAQALTTVIEVEPLKEALGLFLPLYQAHYLDLMRRRLGLTTAEDDDMALVERLLQCMQRGGVDYSLFFRKLGEQPVAEALKVARDDFIDLAGFDAWGADYLARCRREPGNAEGRRERMHAVNPLYVLRNYLAQKAIEAAEAGDYSEVRRLHQVLTRPFEEQPGMQAYAERPPEWGKHLEISCSS.

Gly90, Gly92, Arg93, Lys113, Asp125, Gly126, Arg176, and Arg183 together coordinate ATP. The active-site Proton acceptor is the Asp252. Residues Asn253 and Asp262 each contribute to the Mg(2+) site. Asp262 is a binding site for ATP.

It belongs to the SELO family. It depends on Mg(2+) as a cofactor. The cofactor is Mn(2+).

It carries out the reaction L-seryl-[protein] + ATP = 3-O-(5'-adenylyl)-L-seryl-[protein] + diphosphate. The enzyme catalyses L-threonyl-[protein] + ATP = 3-O-(5'-adenylyl)-L-threonyl-[protein] + diphosphate. The catalysed reaction is L-tyrosyl-[protein] + ATP = O-(5'-adenylyl)-L-tyrosyl-[protein] + diphosphate. It catalyses the reaction L-histidyl-[protein] + UTP = N(tele)-(5'-uridylyl)-L-histidyl-[protein] + diphosphate. It carries out the reaction L-seryl-[protein] + UTP = O-(5'-uridylyl)-L-seryl-[protein] + diphosphate. The enzyme catalyses L-tyrosyl-[protein] + UTP = O-(5'-uridylyl)-L-tyrosyl-[protein] + diphosphate. Nucleotidyltransferase involved in the post-translational modification of proteins. It can catalyze the addition of adenosine monophosphate (AMP) or uridine monophosphate (UMP) to a protein, resulting in modifications known as AMPylation and UMPylation. The sequence is that of Protein nucleotidyltransferase YdiU from Pseudomonas putida (strain ATCC 700007 / DSM 6899 / JCM 31910 / BCRC 17059 / LMG 24140 / F1).